Consider the following 366-residue polypeptide: Peptide chain release factor 2 (366 aa).

At Q253 the chain carries N5-methylglutamine.

It belongs to the prokaryotic/mitochondrial release factor family. Post-translationally, methylated by PrmC. Methylation increases the termination efficiency of RF2.

It localises to the cytoplasm. Functionally, peptide chain release factor 2 directs the termination of translation in response to the peptide chain termination codons UGA and UAA. The chain is Peptide chain release factor 2 from Yersinia pseudotuberculosis serotype I (strain IP32953).